A 118-amino-acid chain; its full sequence is Large ribosomal subunit protein bL20 (118 aa).

Belongs to the bacterial ribosomal protein bL20 family.

In terms of biological role, binds directly to 23S ribosomal RNA and is necessary for the in vitro assembly process of the 50S ribosomal subunit. It is not involved in the protein synthesizing functions of that subunit. The sequence is that of Large ribosomal subunit protein bL20 from Caulobacter vibrioides (strain ATCC 19089 / CIP 103742 / CB 15) (Caulobacter crescentus).